The sequence spans 254 residues: Glutamate racemase (254 aa).

Residues 7–8 and 39–40 contribute to the substrate site; these read DS and YG. Cys-70 functions as the Proton donor/acceptor in the catalytic mechanism. Substrate-binding positions include 71-72 and Glu-147; that span reads NT. The active-site Proton donor/acceptor is the Cys-178. Residue 179-180 coordinates substrate; that stretch reads TH.

Belongs to the aspartate/glutamate racemases family. Homodimer.

The enzyme catalyses L-glutamate = D-glutamate. The protein operates within cell wall biogenesis; peptidoglycan biosynthesis. In terms of biological role, provides the (R)-glutamate required for cell wall biosynthesis. Converts L- or D-glutamate to D- or L-glutamate, respectively, but not other amino acids such as alanine, aspartate, and glutamine. The protein is Glutamate racemase of Aquifex pyrophilus.